Here is a 659-residue protein sequence, read N- to C-terminus: Enzymatic polyprotein (659 aa).

The tract at residues 1–180 is protease; sequence MSLRNRTNPN…FLEEGGNHVD (180 aa). Aspartate 34 is an active-site residue. Residues 252 to 436 enclose the Reverse transcriptase domain; it reads LELKVIKPSK…EKINFLGLEI (185 aa).

This sequence belongs to the caulimoviridae enzymatic polyprotein family.

The catalysed reaction is DNA(n) + a 2'-deoxyribonucleoside 5'-triphosphate = DNA(n+1) + diphosphate. Functionally, encodes for at least two polypeptides: protease (PR) and reverse transcriptase (RT). The protease processes the polyprotein in cis. Reverse transcriptase is multifunctional enzyme that converts the viral RNA genome into dsDNA in viral cytoplasmic capsids. This enzyme displays a DNA polymerase activity that can copy either DNA or RNA templates, and a ribonuclease H (RNase H) activity that cleaves the RNA strand of RNA-DNA heteroduplexes in a partially processive 3'- to 5'-endonucleasic mode. Neo-synthesized pregenomic RNA (pgRNA) are encapsidated, and reverse-transcribed inside the nucleocapsid. Partial (+)DNA is synthesized from the (-)DNA template and generates the relaxed circular DNA (RC-DNA) genome. After budding and infection, the RC-DNA migrates in the nucleus, and is converted into a plasmid-like covalently closed circular DNA (cccDNA). The polypeptide is Enzymatic polyprotein (Dianthus caryophyllus (Carnation)).